We begin with the raw amino-acid sequence, 83 residues long: Small ribosomal subunit protein eS27 (83 aa).

Residues 37–59 (CPGCFNITTVFSHAQTVVICGSC) form a C4-type zinc finger.

This sequence belongs to the eukaryotic ribosomal protein eS27 family. As to quaternary structure, component of the small ribosomal subunit (SSU). Mature yeast ribosomes consist of a small (40S) and a large (60S) subunit. The 40S small subunit contains 1 molecule of ribosomal RNA (18S rRNA) and at least 33 different proteins. The large 60S subunit contains 3 rRNA molecules (25S, 5.8S and 5S rRNA) and at least 46 different proteins. The cofactor is Zn(2+).

The protein localises to the cytoplasm. In terms of biological role, component of the ribosome, a large ribonucleoprotein complex responsible for the synthesis of proteins in the cell. The small ribosomal subunit (SSU) binds messenger RNAs (mRNAs) and translates the encoded message by selecting cognate aminoacyl-transfer RNA (tRNA) molecules. The large subunit (LSU) contains the ribosomal catalytic site termed the peptidyl transferase center (PTC), which catalyzes the formation of peptide bonds, thereby polymerizing the amino acids delivered by tRNAs into a polypeptide chain. The nascent polypeptides leave the ribosome through a tunnel in the LSU and interact with protein factors that function in enzymatic processing, targeting, and the membrane insertion of nascent chains at the exit of the ribosomal tunnel. In Schizosaccharomyces pombe (strain 972 / ATCC 24843) (Fission yeast), this protein is Small ribosomal subunit protein eS27 (rps27).